Here is a 500-residue protein sequence, read N- to C-terminus: Glutathione gamma-glutamylcysteinyltransferase 1 (500 aa).

The Peptidase C83 domain maps to 1–221 (MEVASLYRRV…GFMLVSRRSS (221 aa)). Active-site residues include C56, H162, and D180.

It belongs to the phytochelatin synthase family. As to expression, expressed in roots and shoots.

It carries out the reaction [Glu(-Cys)](n)-Gly + glutathione + H(+) = [Glu(-Cys)](n+1)-Gly + glycine. Requires cadmium for activity. Its function is as follows. Involved in the synthesis of phytochelatins (PC) and homophytochelatins (hPC), the heavy-metal-binding peptides of plants. This chain is Glutathione gamma-glutamylcysteinyltransferase 1 (PCS1), found in Triticum aestivum (Wheat).